A 297-amino-acid polypeptide reads, in one-letter code: Lipoprotein NlpD/LppB homolog (297 aa).

The N-terminal stretch at 1-22 (MDKGEGLRLAATLRQWTRLYGG) is a signal peptide. Residue Cys23 is the site of N-palmitoyl cysteine attachment. Cys23 is lipidated: S-diacylglycerol cysteine. Residues 67 to 111 (GQYIVRRGDTLYSIAFRFGWDWKALAARNGIAPPYTIQVGQAIQF) form the LysM domain. Positions 134–168 (TKPTPVPPAVSTSVPAKPAPAPASTTTPPSSGATP) are disordered.

The protein belongs to the E.coli NlpD/Haemophilus LppB family.

It localises to the cell inner membrane. In Pseudomonas aeruginosa (strain ATCC 15692 / DSM 22644 / CIP 104116 / JCM 14847 / LMG 12228 / 1C / PRS 101 / PAO1), this protein is Lipoprotein NlpD/LppB homolog.